The primary structure comprises 291 residues: Undecaprenyl-diphosphatase (291 aa).

A run of 8 helical transmembrane segments spans residues 1-21, 48-68, 99-119, 123-143, 159-179, 200-220, 236-256, and 269-289; these read MLILELIKGIILGIVEGLTEF, SAFTFKIVIQLGSVFAGAWVF, LHIIVGMIPAGVLGLLFDDVI, LFSVPTVMIGLFIGAIYMIIA, INYFQAFVIGLSQAIAMWPGF, SDFTFIMAVPVMLAASGLSLV, LGFLAAFIVGLIAIKTFLYLI, and IVLVIIIAILYFGFGIGQGIT.

The protein belongs to the UppP family.

The protein resides in the cell membrane. It catalyses the reaction di-trans,octa-cis-undecaprenyl diphosphate + H2O = di-trans,octa-cis-undecaprenyl phosphate + phosphate + H(+). Catalyzes the dephosphorylation of undecaprenyl diphosphate (UPP). Confers resistance to bacitracin. In Staphylococcus saprophyticus subsp. saprophyticus (strain ATCC 15305 / DSM 20229 / NCIMB 8711 / NCTC 7292 / S-41), this protein is Undecaprenyl-diphosphatase.